Consider the following 287-residue polypeptide: Polyamine aminopropyltransferase (287 aa).

Residues 9–242 (GSWLDEYQND…GIWSWTFASI (234 aa)) form the PABS domain. An S-methyl-5'-thioadenosine-binding site is contributed by Gln-36. Residues His-67 and Asp-91 each contribute to the spermidine site. S-methyl-5'-thioadenosine-binding positions include Glu-111 and 143 to 144 (NG). Asp-162 (proton acceptor) is an active-site residue. Pro-169 contacts S-methyl-5'-thioadenosine.

Belongs to the spermidine/spermine synthase family. In terms of assembly, homodimer or homotetramer.

The protein localises to the cytoplasm. It carries out the reaction S-adenosyl 3-(methylsulfanyl)propylamine + putrescine = S-methyl-5'-thioadenosine + spermidine + H(+). Its pathway is amine and polyamine biosynthesis; spermidine biosynthesis; spermidine from putrescine: step 1/1. Functionally, catalyzes the irreversible transfer of a propylamine group from the amino donor S-adenosylmethioninamine (decarboxy-AdoMet) to putrescine (1,4-diaminobutane) to yield spermidine. The sequence is that of Polyamine aminopropyltransferase from Prochlorococcus marinus (strain SARG / CCMP1375 / SS120).